Here is a 617-residue protein sequence, read N- to C-terminus: Sphingosine kinase 2 (617 aa).

Residues 1–140 are required for binding to sulfatide and phosphoinositides and for membrane localization; sequence MAPPPLLPVA…LSGDQEITPE (140 aa). A Nuclear localization signal motif is present at residues 87 to 95; the sequence is RGRRGGRRR. In terms of domain architecture, DAGKc spans 143–290; it reads PRKPRLLILV…LDLLSVTLAS (148 aa). Residues 153-155 and 185-189 contribute to the ATP site; these read NPF and TERQN. 210 to 213 is a binding site for substrate; sequence SGDG. The active-site Proton donor/acceptor is the Asp212. Residues Glu217 and 242–244 each bind ATP; that span reads GSG. Position 309 (Asp309) interacts with substrate. Arg316 and Arg322 together coordinate ATP. Ser358 and Ser364 each carry phosphoserine. The segment at 371–472 is disordered; it reads APAPAATHSP…GFLPPTHSAP (102 aa). Phosphothreonine is present on Thr377. Positions 381–390 match the Nuclear export signal motif; that stretch reads LHRSVSDLPL. Phosphoserine occurs at positions 384 and 386. Positions 412 to 426 are enriched in gly residues; sequence NGGGPELTGDWGGAG. Residue Thr578 is modified to Phosphothreonine. Position 586–588 (586–588) interacts with ATP; sequence DGE.

As to quaternary structure, interacts with histone H3. Interacts with HDAC1, HDAC2, MBD2 and SIN3A. Interacts with EEF1A1; the interaction enhances SPHK2 kinase activity. Interacts with PHB2. Mg(2+) is required as a cofactor. Post-translationally, phosphorylated by PKD on Ser-384 and Ser-386 upon PMA treatment. Phosphorylation induces export from the nucleus to the cytoplasm. Phosphorylated by MAPK1 and MAPK2 at Thr-578, phosphorylation is induced by agonists such as EGF and PMA and increases kinase activity. Cleaved by CASP1 in apoptotic cells. The truncated form is released from cells. In terms of tissue distribution, expressed in heart, brain, liver, kidney and testis. Expressed by mast cells (at protein level). In the substantia nigra, expressed by dopaminergic neurons (at protein level).

It is found in the lysosome membrane. The protein localises to the cytoplasm. Its subcellular location is the cell membrane. The protein resides in the endoplasmic reticulum. It localises to the nucleus. It is found in the mitochondrion inner membrane. The catalysed reaction is a sphingoid base + ATP = a sphingoid 1-phosphate + ADP + H(+). It carries out the reaction sphing-4-enine + ATP = sphing-4-enine 1-phosphate + ADP + H(+). It catalyses the reaction sphinganine + ATP = sphinganine 1-phosphate + ADP + H(+). The enzyme catalyses (4R)-hydroxysphinganine + ATP = (4R)-hydroxysphinganine 1-phosphate + ADP + H(+). In terms of biological role, catalyzes the phosphorylation of sphingosine to form sphingosine-1-phosphate (SPP), a lipid mediator with both intra- and extracellular functions. Also acts on D-erythro-dihydrosphingosine, D-erythro-sphingosine and L-threo-dihydrosphingosine. Binds phosphoinositides. In contrast to prosurvival SPHK1, has a positive effect on intracellular ceramide levels, inhibits cells growth and enhances apoptosis. In mitochondria, is important for cytochrome-c oxidase assembly and mitochondrial respiration. The SPP produced in mitochondria binds PHB2 and modulates the regulation via PHB2 of complex IV assembly and respiration. In nucleus, plays a role in epigenetic regulation of gene expression. Interacts with HDAC1 and HDAC2 and, through SPP production, inhibits their enzymatic activity, preventing the removal of acetyl groups from lysine residues with histones. Up-regulates acetylation of histone H3-K9, histone H4-K5 and histone H2B-K12. In nucleus, may have an inhibitory effect on DNA synthesis and cell cycle. In mast cells, is the main regulator of SPP production which mediates calcium influx, NF-kappa-B activation, cytokine production, such as TNF and IL6, and degranulation of mast cells. In dopaminergic neurons, is involved in promoting mitochondrial functions regulating ATP and ROS levels. Also involved in the regulation of glucose and lipid metabolism. The protein is Sphingosine kinase 2 of Mus musculus (Mouse).